A 99-amino-acid chain; its full sequence is Large ribosomal subunit protein uL23 (99 aa).

Belongs to the universal ribosomal protein uL23 family. As to quaternary structure, part of the 50S ribosomal subunit. Contacts protein L29, and trigger factor when it is bound to the ribosome.

Its function is as follows. One of the early assembly proteins it binds 23S rRNA. One of the proteins that surrounds the polypeptide exit tunnel on the outside of the ribosome. Forms the main docking site for trigger factor binding to the ribosome. This Oenococcus oeni (strain ATCC BAA-331 / PSU-1) protein is Large ribosomal subunit protein uL23.